The following is a 112-amino-acid chain: EHEAEIILDERQDNGDGNFNYRFETTNGIAEERVGVPGSQGQSNMKGGYSFNLPDGSRFQLSFAADENGYNADSPFIPTDHPLPAHVIELLALVEELKRQGATWDDKGVRIT.

The Chitin-binding type R&amp;R domain occupies 16–85 (DGNFNYRFET…FIPTDHPLPA (70 aa)). Residue Thr79 is glycosylated (O-linked (HexNAc) threonine).

As to expression, arthrodial membrane.

The protein is Cuticle protein AM1239 of Cancer pagurus (Rock crab).